The following is a 427-amino-acid chain: Serine--tRNA ligase (427 aa).

Residue 235–237 (TAE) coordinates L-serine. ATP contacts are provided by residues 266–268 (RRE) and V282. E289 contacts L-serine. 353–356 (EASS) provides a ligand contact to ATP. S389 is a binding site for L-serine.

The protein belongs to the class-II aminoacyl-tRNA synthetase family. Type-1 seryl-tRNA synthetase subfamily. As to quaternary structure, homodimer. The tRNA molecule binds across the dimer.

Its subcellular location is the cytoplasm. The catalysed reaction is tRNA(Ser) + L-serine + ATP = L-seryl-tRNA(Ser) + AMP + diphosphate + H(+). It catalyses the reaction tRNA(Sec) + L-serine + ATP = L-seryl-tRNA(Sec) + AMP + diphosphate + H(+). Its pathway is aminoacyl-tRNA biosynthesis; selenocysteinyl-tRNA(Sec) biosynthesis; L-seryl-tRNA(Sec) from L-serine and tRNA(Sec): step 1/1. Functionally, catalyzes the attachment of serine to tRNA(Ser). Is also able to aminoacylate tRNA(Sec) with serine, to form the misacylated tRNA L-seryl-tRNA(Sec), which will be further converted into selenocysteinyl-tRNA(Sec). In Chlorobaculum parvum (strain DSM 263 / NCIMB 8327) (Chlorobium vibrioforme subsp. thiosulfatophilum), this protein is Serine--tRNA ligase.